Reading from the N-terminus, the 221-residue chain is Transmembrane protein 267 (221 aa).

5 helical membrane-spanning segments follow: residues 28-48 (ASAG…LPFI), 57-77 (LFDN…VIGL), 86-106 (VILA…MAGS), 121-141 (LHCS…MWAC), and 182-204 (ISYW…LMYL).

It localises to the membrane. The polypeptide is Transmembrane protein 267 (tmem267) (Danio rerio (Zebrafish)).